Reading from the N-terminus, the 53-residue chain is Rubredoxin (53 aa).

A Rubredoxin-like domain is found at 1-53; sequence MQKFECTLCGYIYDPALVGPDTPDQDGAFEDVSENWVCPLCGAGKEDFEVYED. Positions 6, 9, 38, and 41 each coordinate Fe cation.

It belongs to the rubredoxin family. Requires Fe(3+) as cofactor.

In terms of biological role, rubredoxin is a small nonheme, iron protein lacking acid-labile sulfide. Its single Fe, chelated to 4 Cys, functions as an electron acceptor and may also stabilize the conformation of the molecule. In Peptoniphilus asaccharolyticus (Peptostreptococcus asaccharolyticus), this protein is Rubredoxin.